We begin with the raw amino-acid sequence, 375 residues long: Glutamate 5-kinase (375 aa).

K17 serves as a coordination point for ATP. Positions 57, 144, and 158 each coordinate substrate. ATP is bound at residue 178–179; that stretch reads TD. Residues 284-360 enclose the PUA domain; it reads SGSIVVDTGA…NEIADILGYK (77 aa).

The protein belongs to the glutamate 5-kinase family.

It localises to the cytoplasm. The enzyme catalyses L-glutamate + ATP = L-glutamyl 5-phosphate + ADP. Its pathway is amino-acid biosynthesis; L-proline biosynthesis; L-glutamate 5-semialdehyde from L-glutamate: step 1/2. In terms of biological role, catalyzes the transfer of a phosphate group to glutamate to form L-glutamate 5-phosphate. This Methanococcoides burtonii (strain DSM 6242 / NBRC 107633 / OCM 468 / ACE-M) protein is Glutamate 5-kinase.